A 751-amino-acid chain; its full sequence is MDDSALPSNTSNGINGRTAHRRSSSGGDPFQHPDIYYGNPESVERIKNRRRAFSSSLKSFNRQDFHEMLGDRNTRRGSMDPTSGNPRKFLIDVDATLHSLLEREDSDRNMQITIEDVGPKVFSLGTAASHGYNRFDVRGTYMLSNLLQELTIAKDYGRKQIVLDEERLSENPVSRLSRLIKNSFWNSLTRRIDGRNIEVAGRDPKDWTDDPRPRIYVPPGAPEQLEYYRRIAEEKPELRLDVQELAAEITPEYVRDLNEKPGLLALAMEEKYDEKTGKTDFAGVPFVVPGGRFNELYGWDSYMESLGLLASNRVDLAKAMVINFCFCIKHYGKILNANRSYYLTRSQPPFLTDMALRVYDRIQNEPGAMDFLRHAILAAIKEYYSVWMAEPRLDPVSGLSRYRSPGIGVPPETEASHFLHLLTPYAEKHGMEFKEFVQAYNYGKVKEPELDEYFMHDRAVRESGHDTSYRLERVCGNLATVDLNSLLYKYEVDIARVIRVYFKDKLEIPVEFRTPATKDIQSESSSVWDRRARRRKMRMDTYLWDEEKGMYFDYDTVKQERTNYESATTLWAMWAGLVTPRQASAMITKALPRFEEFGGIVSGTEESRGAVGLNRPTRQWDYPYGWAPQQMLAWTGFARYGYQEEAERLAYKWLYMITKAFVDFNGVVVEKYDVTRPIDPHRVDAEYGNQGVDFKGAPREGFGWVNASYVYGLEMLNAHQRRALGAVTPWETYSKAVSAQGSDTVLENRSE.

Residues Met1 to Asn15 show a composition bias toward polar residues. Disordered stretches follow at residues Met1–Ser42 and Asp64–Lys88. A compositionally biased stretch (basic and acidic residues) spans Asp64–Ser78. Ca(2+) contacts are provided by Asp105, Asp107, Asn109, Gln111, and Asp116. Residues Arg292, Trp299–Asp300, Asn336, Arg345–Gln347, Glu412, Arg461, and Gly464 each bind substrate. Residues Asp466 and Glu670 each act as proton donor/acceptor in the active site.

It belongs to the glycosyl hydrolase 37 family. The cofactor is Ca(2+).

The protein resides in the cytoplasm. The enzyme catalyses alpha,alpha-trehalose + H2O = alpha-D-glucose + beta-D-glucose. Its pathway is carbohydrate degradation. Activated by calcium. Its function is as follows. Hydrolyzes intracellular trehalose to glucose. The disaccharide trehalose serves as a storage carbohydrate that is mobilized during conidial germination. Regulates the level of trehalose as a protectant for cell integrity during heat stress. This Emericella nidulans (strain FGSC A4 / ATCC 38163 / CBS 112.46 / NRRL 194 / M139) (Aspergillus nidulans) protein is Cytosolic neutral trehalase.